The following is a 116-amino-acid chain: Large ribosomal subunit protein eL22A (116 aa).

This sequence belongs to the eukaryotic ribosomal protein eL22 family.

This Dictyostelium discoideum (Social amoeba) protein is Large ribosomal subunit protein eL22A (rpl22).